Here is a 330-residue protein sequence, read N- to C-terminus: MGQPLLLLLLVYTYIPGSWGLRCLQCENTTSCSVEECTPGQDLCRTTVLSVWEGGNEMNVVRKGCTHPDKTNRSMSYRAADQIITLSETVCRSDLCNKPNPGRDATVSRNRYLECASCSSTDLSCERGWDQTMQCLKSRDQCVDVITHRSLKENPGDERHIRGCGILPGCPGPTGFHNNHTFHFLRCCNTTKCNAGSVLELQNLPPNGLQCYSCEGNGAHRCSSEETFLIDCRGPMNQCLEATGTKGLRNPSYTIRGCAAPSWCQSLHVAEAFDLTHVNVSCCTGSGCNHPARDDQPGKGGAPKTSPAHLSFFVSLLLTARLWGATLLCT.

Positions 1–20 (MGQPLLLLLLVYTYIPGSWG) are cleaved as a signal peptide. UPAR/Ly6 domains lie at 21–112 (LRCL…RNRY), 113–208 (LECA…PPNG), and 209–300 (LQCY…PGKG). 3 cysteine pairs are disulfide-bonded: cysteine 23/cysteine 44, cysteine 26/cysteine 32, and cysteine 37/cysteine 65. The N-linked (GlcNAc...) asparagine glycan is linked to asparagine 28. Asparagine 72 carries N-linked (GlcNAc...) asparagine glycosylation. 11 disulfide bridges follow: cysteine 91-cysteine 96, cysteine 115-cysteine 142, cysteine 118-cysteine 125, cysteine 135-cysteine 164, cysteine 170-cysteine 187, cysteine 188-cysteine 193, cysteine 211-cysteine 239, cysteine 214-cysteine 222, cysteine 232-cysteine 258, cysteine 264-cysteine 282, and cysteine 283-cysteine 288. Residues asparagine 179 and asparagine 189 are each glycosylated (N-linked (GlcNAc...) asparagine). Residue asparagine 279 is glycosylated (N-linked (GlcNAc...) asparagine). Glycine 300 carries GPI-anchor amidated glycine lipidation. Residues 301-330 (GAPKTSPAHLSFFVSLLLTARLWGATLLCT) constitute a propeptide, removed in mature form.

In terms of assembly, monomer. Interacts (via the UPAR/Ly6 domains) with SRPX2. Interacts with MRC2. Interacts with SORL1 (via N-terminal ectodomain); this interaction decreases PLAUR internalization. The ternary complex composed of PLAUR-PLAU-SERPINE1 also interacts with SORL1. Interacts with CD82; this interaction prevents PLAUR from binding to its high affinity ligand PLAU.

It is found in the cell membrane. In terms of biological role, acts as a receptor for urokinase plasminogen activator. Plays a role in localizing and promoting plasmin formation. Mediates the proteolysis-independent signal transduction activation effects of U-PA. In Bos taurus (Bovine), this protein is Urokinase plasminogen activator surface receptor (PLAUR).